Reading from the N-terminus, the 367-residue chain is Serine/threonine-protein kinase-transforming protein Rmil (367 aa).

The segment at 1 to 64 (EGGSTAGLSA…DSSDDWEIPD (64 aa)) is disordered. Positions 33–57 (QRERKSSSSSEDRNRMKTLGRRDSS) are enriched in basic and acidic residues. One can recognise a Protein kinase domain in the interval 67–327 (ITVGQRIGSG…PQILASIELL (261 aa)). ATP contacts are provided by residues 73–81 (IGSGSFGTV) and K93. D186 acts as the Proton acceptor in catalysis.

It belongs to the protein kinase superfamily. TKL Ser/Thr protein kinase family. RAF subfamily.

It catalyses the reaction L-seryl-[protein] + ATP = O-phospho-L-seryl-[protein] + ADP + H(+). The catalysed reaction is L-threonyl-[protein] + ATP = O-phospho-L-threonyl-[protein] + ADP + H(+). The protein is Serine/threonine-protein kinase-transforming protein Rmil (V-RMIL) of Avian retrovirus IC10.